A 519-amino-acid polypeptide reads, in one-letter code: Histidine--tRNA ligase (519 aa).

This sequence belongs to the class-II aminoacyl-tRNA synthetase family. In terms of assembly, homodimer.

The protein resides in the cytoplasm. It catalyses the reaction tRNA(His) + L-histidine + ATP = L-histidyl-tRNA(His) + AMP + diphosphate + H(+). The chain is Histidine--tRNA ligase from Roseobacter denitrificans (strain ATCC 33942 / OCh 114) (Erythrobacter sp. (strain OCh 114)).